We begin with the raw amino-acid sequence, 251 residues long: Imidazole glycerol phosphate synthase subunit HisF (251 aa).

Catalysis depends on residues Asp-11 and Asp-130.

It belongs to the HisA/HisF family. As to quaternary structure, heterodimer of HisH and HisF.

The protein resides in the cytoplasm. The enzyme catalyses 5-[(5-phospho-1-deoxy-D-ribulos-1-ylimino)methylamino]-1-(5-phospho-beta-D-ribosyl)imidazole-4-carboxamide + L-glutamine = D-erythro-1-(imidazol-4-yl)glycerol 3-phosphate + 5-amino-1-(5-phospho-beta-D-ribosyl)imidazole-4-carboxamide + L-glutamate + H(+). The protein operates within amino-acid biosynthesis; L-histidine biosynthesis; L-histidine from 5-phospho-alpha-D-ribose 1-diphosphate: step 5/9. Functionally, IGPS catalyzes the conversion of PRFAR and glutamine to IGP, AICAR and glutamate. The HisF subunit catalyzes the cyclization activity that produces IGP and AICAR from PRFAR using the ammonia provided by the HisH subunit. The sequence is that of Imidazole glycerol phosphate synthase subunit HisF from Listeria welshimeri serovar 6b (strain ATCC 35897 / DSM 20650 / CCUG 15529 / CIP 8149 / NCTC 11857 / SLCC 5334 / V8).